The sequence spans 317 residues: MAELACFCYPHLENDSYKFIPFNNLAIKAMLTAKVDKKDMDKFYDSIIYGIAPPPQFKKRYNTNDNSRGMNFETIMFTKVAMLICEALNSLKVTQANVSNVLSRVVSIRHLENLVIRKENPQDILFHSKDLLLKSTLIAIGQSKEIETTITAEGGEIVFQNAAFTMWKLTYLEHQLMPILDQNFIEYKVTLNEDKPISDVHVKELVAELRWQYNKFAVITHGKGHYRIVKYSSVANHADRVYATFKSNVKTGVNNDFNLLDQRIIWQNWYAFTSTMKQGNTLDVCKRLLFQKMKPEKNPFKGLSTDRKMDEVSQVGV.

Residues 107–109 (SIR), lysine 188, and 221–223 (HGK) contribute to the ATP site. An RNA-binding region spans residues 205–241 (LVAELRWQYNKFAVITHGKGHYRIVKYSSVANHADRV). Residue histidine 225 is the For NTPase and RTPase activities of the active site. Position 227 (arginine 227) interacts with ATP.

It belongs to the rotavirus NSP2 family. As to quaternary structure, homooctamer. Interacts with VP1; this interaction is weak. Interacts with NSP5; this interaction leads to up-regulation of NSP5 phosphorylation and formation of viral factories. Interacts with host DCP1A, DCP1B, DDX6, EDC4 and EIF2S1/eIF2-alpha; these interactions are probably part of the sequestration of some host SGs and PBs proteins in viral factories. It depends on Mg(2+) as a cofactor.

It localises to the host cytoplasm. Its function is as follows. Participates in replication and packaging of the viral genome. Plays a crucial role, together with NSP5, in the formation of virus factories (viroplasms), which are large inclusions in the host cytoplasm where replication intermediates are assembled and viral RNA replication takes place. Displays ssRNA binding, NTPase, RNA triphosphatase (RTPase) and ATP-independent helix-unwinding activities. The unwinding activity may prepare and organize plus-strand RNAs for packaging and replication by removing interfering secondary structures. The RTPase activity plays a role in the removal of the gamma-phosphate from the rotavirus RNA minus strands of dsRNA genome segments. Participates in the selective exclusion of host proteins from stress granules (SG) and P bodies (PB). Also participates in the sequestration of these remodeled organelles in viral factories. The polypeptide is Non-structural protein 2 (Rotavirus A (strain RVA/SA11-Patton/G3P[X]) (RV-A)).